Reading from the N-terminus, the 433-residue chain is Voltage-gated potassium channel regulatory subunit KCNG3 (433 aa).

Residues 1-165 (MTFGRGGAAS…RTFEEPTSSL (165 aa)) are Cytoplasmic-facing. The helical transmembrane segment at 166–187 (AAQILASVSVVFVIVSMVVLCA) threads the bilayer. At 188–217 (STLPDWRAAVADNRSLDDRSRYSASPGREP) the chain is on the extracellular side. The helical transmembrane segment at 218-239 (SGIIEAICIGWFTAECIVRFIV) threads the bilayer. Topologically, residues 240-250 (SKNKCEFVKRP) are cytoplasmic. The chain crosses the membrane as a helical span at residues 251–271 (LNIIDLLAITPYYISVLMTVF). The Extracellular portion of the chain corresponds to 272-281 (TGENSQLQRA). The chain crosses the membrane as a helical; Voltage-sensor span at residues 282–302 (GVTLRVLRMMRIFWVIKLARH). At 303-317 (FIGLQTLGLTLKRCY) the chain is on the cytoplasmic side. Residues 318–339 (REMAMLLVFICVAMAIFSALSQ) form a helical membrane-spanning segment. The Extracellular portion of the chain corresponds to 340 to 357 (LLEHGLDLETSNKDFASI). Residues 358 to 369 (PAACWWVIISMT) constitute an intramembrane region (helical). The Selectivity filter signature appears at 370-375 (TVGYGD). Residues 370 to 377 (TVGYGDMY) lie within the membrane without spanning it. The Extracellular segment spans residues 378–384 (PITVPGR). A helical transmembrane segment spans residues 385 to 413 (ILGGVCVVSGIVLLALPITFIYHSFVQCY). Residues 414–433 (HELKFRSARYSRSLSAEFLN) lie on the Cytoplasmic side of the membrane.

Belongs to the potassium channel family. G (TC 1.A.1.2) subfamily. Kv6.3/KCNG3 sub-subfamily. As to quaternary structure, heterotetramer with KCNB1. Does not form homomultimers.

It localises to the cell membrane. It is found in the cytoplasm. Functionally, regulatory subunit of the voltage-gated potassium (Kv) channel which, when coassembled with KCNB1, modulates the kinetics parameters of the heterotetrameric channel namely the inactivation and deactivation rate. Potassium channel subunit that does not form functional channels by itself. Reduces the deactivation rate. Moderately acceleratee activation. The sequence is that of Voltage-gated potassium channel regulatory subunit KCNG3 from Mus musculus (Mouse).